The sequence spans 1906 residues: Myosin light chain kinase, smooth muscle (1906 aa).

Ig-like C2-type domains follow at residues 28–117 (PAFT…VELT) and 156–244 (PKFA…AELT). 2 disordered regions span residues 127-157 (SLPS…SPPK) and 309-453 (ETFY…SKVS). Basic and acidic residues predominate over residues 309 to 321 (ETFYTSREAKDGK). Composition is skewed to polar residues over residues 345-354 (LQKTSSTITL) and 384-402 (PLMT…QVSP). Residues 403 to 424 (RSRETENRAGVRKSVKEEKREP) are compositionally biased toward basic and acidic residues. Ig-like C2-type domains lie at 429–517 (PQFE…WLLT), 521–613 (PKVE…AQVT), 637–725 (PIFL…ATLT), and 735–830 (PWFI…SSAS). The IIA-1 repeat unit spans residues 660–676 (VSANPCPEIIWLHNGKE). A 4 X repeats, motif IIA region spans residues 660 to 1833 (VSANPCPEII…EVMWYKDDQP (1174 aa)). The IIB-1 repeat unit spans residues 693–708 (SLYIQEVFPEDTGKYT). The 5 X repeats, motif IIB stretch occupies residues 693-1866 (SLYIQEVFPE…VCGDDDAKYT (1174 aa)). The stretch at 758-774 (IAGDPFPTVHWFKDGQE) is one IIA-2 repeat. Residues 791 to 807 (TLILRNVQSRHAGQYEI) form an IIB-2 repeat. Disordered stretches follow at residues 831 to 881 (RAEM…QEDV) and 947 to 1086 (PKTL…APSF). Basic and acidic residues-rich tracts occupy residues 833-850 (EMLR…RRDG) and 867-881 (SSSE…QEDV). Residues 970–987 (AKKGTPKTPLPEKVPPPK) form an III-1 repeat. The tract at residues 970 to 1226 (AKKGTPKTPL…TPPKAATPPQ (257 aa)) is 4 X repeats, motif III. The span at 977–988 (TPLPEKVPPPKP) shows a compositional bias: pro residues. Residues 999-1016 (AKKKPPAENGSASTPAPN) form an III-2 repeat. The segment covering 1039–1051 (VKKEEKNDRKCEH) has biased composition (basic and acidic residues). An III-3 repeat occupies 1061–1078 (IGKKAENKPAASKPTPPP). Ig-like C2-type domains are found at residues 1084 to 1172 (PSFT…CKVL) and 1225 to 1313 (PQIT…VNLT). Residues 1107 to 1123 (ISSDPPASVSWTLDSKA) form an IIA-3 repeat. Residues 1140-1156 (SLTIEKVMPEDGGEYKC) form an IIB-3 repeat. The disordered stretch occupies residues 1180–1227 (KAAKPAEKKTKKPKTTLPPVLSTESSEATVKKKPAPKTPPKAATPPQI). The stretch at 1209–1226 (VKKKPAPKTPPKAATPPQ) is one III-4 repeat. The IIB-4 repeat unit spans residues 1281-1297 (KLTISSTKQEHCGCYTL). The segment at 1317–1364 (KPDPPAGTPCASDIRSSSLTLSWYGSSYDGGSAVQSYTVEIWNSVDNK) is motif IA. Positions 1321-1414 (PAGTPCASDI…ESEVVKVGEK (94 aa)) constitute a Fibronectin type-III domain. Residues 1385-1402 (REYKFRVRAANVYGISEP) form a motif IB region. A disordered region spans residues 1414-1433 (KQEEELKEEEAELSDDEGKE). Over residues 1415 to 1432 (QEEELKEEEAELSDDEGK) the composition is skewed to acidic residues. In terms of domain architecture, Protein kinase spans 1453 to 1708 (YNIEERLGSG…CTQCLQHPWL (256 aa)). ATP-binding positions include 1459-1467 (LGSGKFGQV) and Lys-1482. The Proton acceptor role is filled by Asp-1574. Residues 1700–1763 (TQCLQHPWLQ…SGMSGRKASG (64 aa)) are calmodulin-binding. Residues 1716-1728 (EAKKLSKDRMKKY) are calmodulin autoinhibition (AM13) region. Residues 1730 to 1749 (ARRKWQKTGHAVRAIGRLSS) are calmodulin recognition (RS20) region. Position 1762 is a phosphoserine; by PKG (Ser-1762). Position 1768 is a phosphoserine; by MAPK (Ser-1768). The Ig-like C2-type 9 domain occupies 1794-1885 (PYFTKTILDM…ATCTAELLVE (92 aa)). An IIA-4 repeat occupies 1817-1833 (IEGYPDPEVMWYKDDQP). The IIB-5 repeat unit spans residues 1851–1866 (SLTISEVCGDDDAKYT). The segment at 1885 to 1906 (ETMGKEGEGEGEGEEDEEEEEE) is disordered. Residues 1893–1906 (GEGEGEEDEEEEEE) show a composition bias toward acidic residues.

Belongs to the protein kinase superfamily. CAMK Ser/Thr protein kinase family. In terms of assembly, all isoforms including Telokin bind calmodulin. Mg(2+) is required as a cofactor. Ca(2+) serves as cofactor. In terms of processing, the C-terminus is deglutamylated, leading to the formation of Myosin light chain kinase, smooth muscle, deglutamylated form. The C-terminus is variable, with one to five C-terminal glutamyl residues being removed producing five forms differring in their number of C-terminal glutamyl residues. Acetylated. Post-translationally, phosphorylation of telokin by PKG has no significant effect on its myosin binding activity, but promotes translocation to the membrane. Isoform telokin is expressed in gizzard, heart, lung, intestine, and skeletal muscle although the levels of the expression in the latter were much less than that in the gizzard.

The protein resides in the cytoplasm. The protein localises to the cytosol. Its subcellular location is the membrane. The enzyme catalyses L-seryl-[myosin light chain] + ATP = O-phospho-L-seryl-[myosin light chain] + ADP + H(+). It carries out the reaction L-threonyl-[myosin light chain] + ATP = O-phospho-L-threonyl-[myosin light chain] + ADP + H(+). Its activity is regulated as follows. Activated by phosphorylation on Tyr-478. Isoforms which lack this tyrosine residue are not regulated in this way. All catalytically active isoforms require binding to calcium and calmodulin for activation. In terms of biological role, phosphorylates a specific serine in the N-terminus of a myosin light chain, which leads to the formation of calmodulin/MLCK signal transduction complexes which allow selective transduction of calcium signals. The protein is Myosin light chain kinase, smooth muscle (Mylk) of Gallus gallus (Chicken).